Here is a 506-residue protein sequence, read N- to C-terminus: Maturase K (506 aa).

The protein belongs to the intron maturase 2 family. MatK subfamily.

The protein localises to the plastid. It is found in the chloroplast. Functionally, usually encoded in the trnK tRNA gene intron. Probably assists in splicing its own and other chloroplast group II introns. This Austrosteenisia blackii (Blood vine) protein is Maturase K.